A 288-amino-acid polypeptide reads, in one-letter code: Beta-lactamase CARB-4 (288 aa).

Positions 1–17 (MKLLLVFSLLIPSMVFA) are cleaved as a signal peptide. Serine 65 functions as the Acyl-ester intermediate in the catalytic mechanism. Cysteine 72 and cysteine 118 are joined by a disulfide. 229-231 (RSG) contacts substrate.

Belongs to the class-A beta-lactamase family.

It carries out the reaction a beta-lactam + H2O = a substituted beta-amino acid. Its activity is regulated as follows. Inhibited by clavulanic acid and sulbactam. Its function is as follows. Hydrolyzes carbenicillin. Methicillin and oxacillin are weakly hydrolyzed. The sequence is that of Beta-lactamase CARB-4 (carB4) from Pseudomonas aeruginosa.